The sequence spans 475 residues: Ribulose bisphosphate carboxylase large chain (475 aa).

Residues 1–2 constitute a propeptide that is removed on maturation; it reads MS. An N-acetylproline modification is found at proline 3. Lysine 14 is subject to N6,N6,N6-trimethyllysine. Substrate is bound by residues asparagine 123 and threonine 173. Lysine 175 (proton acceptor) is an active-site residue. Lysine 177 serves as a coordination point for substrate. Residues lysine 201, aspartate 203, and glutamate 204 each contribute to the Mg(2+) site. Lysine 201 bears the N6-carboxylysine mark. The active-site Proton acceptor is the histidine 294. Substrate contacts are provided by arginine 295, histidine 327, and serine 379.

This sequence belongs to the RuBisCO large chain family. Type I subfamily. Heterohexadecamer of 8 large chains and 8 small chains; disulfide-linked. The disulfide link is formed within the large subunit homodimers. Mg(2+) serves as cofactor. The disulfide bond which can form in the large chain dimeric partners within the hexadecamer appears to be associated with oxidative stress and protein turnover.

The protein resides in the plastid. It is found in the chloroplast. The enzyme catalyses 2 (2R)-3-phosphoglycerate + 2 H(+) = D-ribulose 1,5-bisphosphate + CO2 + H2O. It carries out the reaction D-ribulose 1,5-bisphosphate + O2 = 2-phosphoglycolate + (2R)-3-phosphoglycerate + 2 H(+). In terms of biological role, ruBisCO catalyzes two reactions: the carboxylation of D-ribulose 1,5-bisphosphate, the primary event in carbon dioxide fixation, as well as the oxidative fragmentation of the pentose substrate in the photorespiration process. Both reactions occur simultaneously and in competition at the same active site. This is Ribulose bisphosphate carboxylase large chain from Psilotum nudum (Whisk fern).